The sequence spans 256 residues: MILLLVLALGLAGASPLGEYKECPPHSRPWQVNLHDGKMSCSGALIDRWWIVTSFDCALTAHRTIATLGDHDLTVEEGTEQHIPVAEVIVHSPYRSPLHSLTMVRLAQPAQFNQHVQPVPLASRCPQPGEICSVSGWGSTRPNHFEPQQRLKCITVPVVDDQTCVNTFPQYLYWSQHMVCAGRADTDNCMSNRGSVMVCGGQLQGVQWFNHGCKDPAHPSVYSKMCLYNDWIHQVMARHPPFETTTVSTTTRGRKD.

Positions 1–14 (MILLLVLALGLAGA) are cleaved as a signal peptide. The region spanning 15–237 (SPLGEYKECP…YNDWIHQVMA (223 aa)) is the Peptidase S1 domain. 6 cysteine pairs are disulfide-bonded: cysteine 23-cysteine 153, cysteine 41-cysteine 57, cysteine 125-cysteine 226, cysteine 132-cysteine 199, cysteine 164-cysteine 180, and cysteine 189-cysteine 213.

This sequence belongs to the peptidase S1 family.

The sequence is that of Trypsinogen-like protein 3 (trp3) from Pseudopleuronectes americanus (Winter flounder).